We begin with the raw amino-acid sequence, 188 residues long: Pyridoxal 5'-phosphate synthase subunit PdxT (188 aa).

47–49 contacts L-glutamine; sequence GES. The Nucleophile role is filled by C79. L-glutamine contacts are provided by residues R105 and 134-135; that span reads IR. Residues H170 and E172 each act as charge relay system in the active site.

Belongs to the glutaminase PdxT/SNO family. As to quaternary structure, in the presence of PdxS, forms a dodecamer of heterodimers. Only shows activity in the heterodimer.

The catalysed reaction is aldehydo-D-ribose 5-phosphate + D-glyceraldehyde 3-phosphate + L-glutamine = pyridoxal 5'-phosphate + L-glutamate + phosphate + 3 H2O + H(+). It carries out the reaction L-glutamine + H2O = L-glutamate + NH4(+). Its pathway is cofactor biosynthesis; pyridoxal 5'-phosphate biosynthesis. In terms of biological role, catalyzes the hydrolysis of glutamine to glutamate and ammonia as part of the biosynthesis of pyridoxal 5'-phosphate. The resulting ammonia molecule is channeled to the active site of PdxS. This is Pyridoxal 5'-phosphate synthase subunit PdxT from Listeria monocytogenes serovar 1/2a (strain ATCC BAA-679 / EGD-e).